The primary structure comprises 466 residues: Protein tilB homolog (466 aa).

4 LRR repeats span residues 22-43 (SLEELSLHQQEIERLEHIDKWC), 45-66 (DLKILYLQNNLIGKIENVSKLK), 67-88 (KLEYLNLALNNIEKIENLEGCE), and 89-110 (ELAKLDLTVNFIGELSSIKTLK). Residues 123-161 (NPCAFFDHYREFVVATLPQLKWLDGKGIEPSERIKALQE) enclose the LRRCT domain. Positions 178-204 (LKRAKLKEEAQRKHQEEDKNEDKRSNA) form a coiled coil. Composition is skewed to basic and acidic residues over residues 185-202 (EEAQRKHQEEDKNEDKRS) and 269-279 (EKQRKNQEKLS). 2 disordered regions span residues 185–206 (EEAQRKHQEEDKNEDKRSNAGF) and 269–288 (EKQRKNQEKLSERKKKVKPP). The CS domain maps to 301–396 (VNEPKIDFSL…GGQRAFTSVK (96 aa)). The tract at residues 418 to 466 (VDPSKHSFPDVTNIVQGKKHTPRRRPEPKIIPSEEDPTFEDNPEVPPLI) is disordered. The segment covering 450 to 460 (SEEDPTFEDNP) has biased composition (acidic residues).

Belongs to the tilB family. As to quaternary structure, interacts (via CS domain) with ZMYND10 (via C-terminus).

It is found in the cytoplasm. It localises to the cell projection. The protein localises to the cilium. May play a role in dynein arm assembly, hence essential for proper axoneme building for cilia motility. The sequence is that of Protein tilB homolog (LRCC6) from Macaca fascicularis (Crab-eating macaque).